Consider the following 464-residue polypeptide: Fumarate hydratase class II (464 aa).

Substrate-binding positions include 98-100 (SGT), 129-132 (HPND), 139-141 (SSN), and Thr187. His188 (proton donor/acceptor) is an active-site residue. Ser318 is a catalytic residue. Substrate is bound by residues Ser319 and 324 to 326 (KVN).

This sequence belongs to the class-II fumarase/aspartase family. Fumarase subfamily. Homotetramer.

Its subcellular location is the cytoplasm. It carries out the reaction (S)-malate = fumarate + H2O. It participates in carbohydrate metabolism; tricarboxylic acid cycle; (S)-malate from fumarate: step 1/1. Involved in the TCA cycle. Catalyzes the stereospecific interconversion of fumarate to L-malate. The sequence is that of Fumarate hydratase class II from Haemophilus influenzae (strain ATCC 51907 / DSM 11121 / KW20 / Rd).